Consider the following 196-residue polypeptide: Small ribosomal subunit protein uS4c (196 aa).

Positions 89–157 (MRLDNILFRL…VQNYIASSDP (69 aa)) constitute an S4 RNA-binding domain.

It belongs to the universal ribosomal protein uS4 family. In terms of assembly, part of the 30S ribosomal subunit. Contacts protein S5. The interaction surface between S4 and S5 is involved in control of translational fidelity.

It localises to the plastid. It is found in the chloroplast. In terms of biological role, one of the primary rRNA binding proteins, it binds directly to 16S rRNA where it nucleates assembly of the body of the 30S subunit. Its function is as follows. With S5 and S12 plays an important role in translational accuracy. The sequence is that of Small ribosomal subunit protein uS4c (rps4) from Elymus canadensis (Canada wild rye).